The primary structure comprises 415 residues: Beta-1,4-glucuronyltransferase 1 (415 aa).

The Cytoplasmic segment spans residues 1–8; the sequence is MQMSYAIR. The helical; Signal-anchor for type II membrane protein transmembrane segment at 9 to 36 threads the bilayer; sequence CAFYQLLLAALMLVAMLQLLYLSLLSGL. Residues 37-415 are Lumenal-facing; the sequence is HGQEEQDQYF…AKYPDSPRHC (379 aa). N-linked (GlcNAc...) asparagine glycosylation occurs at Asn-204. Mn(2+)-binding residues include Asp-227 and Asp-229. A glycan (N-linked (GlcNAc...) asparagine) is linked at Asn-300.

It belongs to the glycosyltransferase 49 family. Interacts with LARGE1 and LARGE2. It depends on Mn(2+) as a cofactor.

Its subcellular location is the golgi apparatus membrane. It carries out the reaction 3-O-[beta-D-Xyl-(1-&gt;4)-Rib-ol-P-Rib-ol-P-3-beta-D-GalNAc-(1-&gt;3)-beta-D-GlcNAc-(1-&gt;4)-(O-6-P-alpha-D-Man)]-Thr-[protein] + UDP-alpha-D-glucuronate = 3-O-[beta-D-GlcA-(1-&gt;3)-beta-D-Xyl-(1-&gt;4)-Rib-ol-P-Rib-ol-P-3-beta-D-GalNAc-(1-&gt;3)-beta-D-GlcNAc-(1-&gt;4)-(O-6-P-alpha-D-Man)]-Thr-[protein] + UDP + H(+). Its pathway is protein modification; protein glycosylation. Beta-1,4-glucuronyltransferase involved in O-mannosylation of alpha-dystroglycan (DAG1). Transfers a glucuronic acid (GlcA) residue onto a xylose (Xyl) acceptor to produce the glucuronyl-beta-1,4-xylose-beta disaccharide primer, which is further elongated by LARGE1, during synthesis of phosphorylated O-mannosyl glycan. Phosphorylated O-mannosyl glycan is a carbohydrate structure present in alpha-dystroglycan (DAG1), which is required for binding laminin G-like domain-containing extracellular proteins with high affinity. Required for axon guidance; via its function in O-mannosylation of alpha-dystroglycan (DAG1). The protein is Beta-1,4-glucuronyltransferase 1 of Bos taurus (Bovine).